We begin with the raw amino-acid sequence, 218 residues long: Outer-membrane lipoprotein LolB (218 aa).

An N-terminal signal peptide occupies residues 1–20 (MSQVIRTLALTGLALAGLSG). Cys-21 carries N-palmitoyl cysteine lipidation. Residue Cys-21 is the site of S-diacylglycerol cysteine attachment.

It belongs to the LolB family. In terms of assembly, monomer.

The protein resides in the cell outer membrane. Its function is as follows. Plays a critical role in the incorporation of lipoproteins in the outer membrane after they are released by the LolA protein. The sequence is that of Outer-membrane lipoprotein LolB from Xanthomonas campestris pv. campestris (strain B100).